Consider the following 328-residue polypeptide: Ferredoxin--NADP reductase 2 (328 aa).

Positions 16, 35, 43, 48, 88, 123, 284, and 325 each coordinate FAD.

The protein belongs to the ferredoxin--NADP reductase type 2 family. Homodimer. FAD is required as a cofactor.

It carries out the reaction 2 reduced [2Fe-2S]-[ferredoxin] + NADP(+) + H(+) = 2 oxidized [2Fe-2S]-[ferredoxin] + NADPH. This is Ferredoxin--NADP reductase 2 from Oceanobacillus iheyensis (strain DSM 14371 / CIP 107618 / JCM 11309 / KCTC 3954 / HTE831).